The following is a 454-amino-acid chain: N-myc 2 proto-oncogene protein (454 aa).

Disordered stretches follow at residues 132-166 (SEKMQHGHEPAATGPATQVPGAGAASPAGRGHSGT), 230-269 (VAAPPGLSSRPPNGGDHKVLSTSGEDALSDEVDEEEDEEE), and 325-374 (PSPY…VRRR). Residues 151–161 (PGAGAASPAGR) are compositionally biased toward low complexity. Positions 256–269 (ALSDEVDEEEDEEE) are enriched in acidic residues. The span at 363–374 (RKSDSEDSVRRR) shows a compositional bias: basic and acidic residues. The bHLH domain occupies 371–423 (VRRRNHNILERQRRNDLRSSFTTLRDHVPELVKNEKAAKVVILKKACEYVHYL). The leucine-zipper stretch occupies residues 423–444 (LQAKEHQLLMEKEKLQARQQQL).

In terms of assembly, efficient DNA binding requires dimerization with another bHLH protein.

It localises to the nucleus. This chain is N-myc 2 proto-oncogene protein (N-MYC2), found in Marmota monax (Woodchuck).